Reading from the N-terminus, the 397-residue chain is Gastric triacylglycerol lipase (397 aa).

The N-terminal stretch at 1–19 (MWWLLVTVCFIHMSGNAFC) is a signal peptide. An N-linked (GlcNAc...) asparagine glycan is attached at Asn-33. The AB hydrolase-1 domain occupies 77 to 376 (PVVFLQHGLL…PNYNHLDFIW (300 aa)). The Nucleophile role is filled by Ser-171. A disulfide bond links Cys-245 and Cys-254. Residues Asn-270 and Asn-326 are each glycosylated (N-linked (GlcNAc...) asparagine). Active-site charge relay system residues include Asp-342 and His-371.

Belongs to the AB hydrolase superfamily. Lipase family.

It is found in the secreted. It carries out the reaction a triacylglycerol + H2O = a diacylglycerol + a fatty acid + H(+). It catalyses the reaction 1,2,3-tri-(9Z-octadecenoyl)-glycerol + H2O = 1,2-di-(9Z-octadecenoyl)-sn-glycerol + (9Z)-octadecenoate + H(+). The enzyme catalyses 1,2,3-trioctanoylglycerol + H2O = 1,2-dioctanoyl-sn-glycerol + octanoate + H(+). Its activity is regulated as follows. Inhibited by diethylp-nitrophenyl phosphate but not inhibited by thiol reagents 5,5'-dithiobis(2-nitrobenzoic acid) or 4,4'-dithiopyridine. In terms of biological role, catalyzes the hydrolysis of triacylglycerols to yield free fatty acids, diacylglycerol, monoacylglycerol, and glycerol. Shows a preferential hydrolysis at the sn-3 position of triacylglycerol. This Bos taurus (Bovine) protein is Gastric triacylglycerol lipase (LIPF).